A 615-amino-acid chain; its full sequence is Ankyrin repeat and LEM domain-containing protein 1 (615 aa).

3 ANK repeats span residues 39 to 71 (DGAA…DPNA), 75 to 104 (EALT…DPAL), and 108 to 137 (DGLR…RTRT). Residues 138–210 (RTRIGAETQE…DKHGSSASPP (73 aa)) are disordered. A Nuclear export signal motif is present at residues 271–280 (LNARLQALTL). Over residues 283–294 (PNAAGFQSSPSS) the composition is skewed to polar residues. Residues 283–315 (PNAAGFQSSPSSMPLLDRSPAHSPPRTPTPGAS) form a disordered region. The 45-residue stretch at 355–399 (HLPVSTVSDLELLKGLRALGENPHPITPFTRQLYHQQLEEAQIAP) folds into the LEM domain. The GIY-YIG domain occupies 448–566 (KSSFTYLLLD…ALGIQTLTNQ (119 aa)). Positions 579-586 (PPARRRRL) match the Nuclear localization signal motif.

In terms of assembly, interacts (via LEM domain) with BANF1; the interaction may favor BANF1 dimerization. In terms of tissue distribution, expression is predominant in adult bone marrow.

It localises to the cytoplasm. The protein localises to the nucleus. Its function is as follows. Endonuclease that probably plays a role in the DNA damage response and DNA repair. In Homo sapiens (Human), this protein is Ankyrin repeat and LEM domain-containing protein 1 (ANKLE1).